Consider the following 180-residue polypeptide: Large ribosomal subunit protein uL6 (180 aa).

Belongs to the universal ribosomal protein uL6 family. In terms of assembly, part of the 50S ribosomal subunit.

This protein binds to the 23S rRNA, and is important in its secondary structure. It is located near the subunit interface in the base of the L7/L12 stalk, and near the tRNA binding site of the peptidyltransferase center. This is Large ribosomal subunit protein uL6 from Dictyoglomus turgidum (strain DSM 6724 / Z-1310).